The following is a 424-amino-acid chain: Protein maelstrom 1 (424 aa).

A DNA-binding region (HMG box) is located at residues 2-69 (PPKKHSGFMM…LTRVKKERLN (68 aa)).

This sequence belongs to the maelstrom family.

It is found in the cytoplasm. The protein resides in the nucleus. In terms of biological role, involved both in the piRNA and miRNA metabolic processes. As a component of the meiotic nuage, plays a central role during oogenesis by repressing transposable elements and preventing their mobilization, which is essential for the germline integrity. Repression of transposable elements is mediated via the piRNA metabolic process, which mediates the repression of transposable elements during meiosis by forming complexes composed of piRNAs and Piwi proteins and governs the repression of transposons. As a nuclear component, it is required for proper differentiation in the germline stem cell (GSC) lineage by repressing microRNA-7 (miR-7), thereby acting as an indirect regulator of bag-of-marbles (Bam). Acts by binding to the promoter of miR-7 gene and repressing its expression; miR-7 repression alleviates the Bam repression by miR-7, thereby allowing differentiation in the germline stem cell (GSC) lineage. This Drosophila ananassae (Fruit fly) protein is Protein maelstrom 1 (mael1).